The sequence spans 65 residues: Large ribosomal subunit protein bL35 (65 aa).

A disordered region spans residues 1–52 (MPKMKSNRAAAKRFKRTANGGFKSGNSFTSHRFHGKTKKQRRQLRGLSMMDK). Positions 31-44 (HRFHGKTKKQRRQL) are enriched in basic residues.

The protein belongs to the bacterial ribosomal protein bL35 family.

The polypeptide is Large ribosomal subunit protein bL35 (Limosilactobacillus reuteri (strain DSM 20016) (Lactobacillus reuteri)).